The chain runs to 406 residues: Interactor protein for cytohesin exchange factors 1 (406 aa).

The PH domain maps to 13–112; sequence HADCQGWLYK…WLNKLGFAVT (100 aa). Disordered stretches follow at residues 120–173, 253–285, and 383–406; these read DEEC…FSSL, SLNN…EDDE, and PQDP…ENSL. Over residues 123 to 134 the composition is skewed to acidic residues; that stretch reads CYSESEQEDPEV. The segment covering 144-153 has biased composition (low complexity); it reads ASTTSSPVAA. Position 164 is a phosphoserine (R164). Residues 272 to 285 are compositionally biased toward basic and acidic residues; the sequence is MADREEIKSSEDDE. A compositionally biased stretch (polar residues) spans 392–406; the sequence is EVMNPTSSDCVENSL.

As to quaternary structure, interacts with guanine-nucleotide exchange factors PSCD1, PSCD2, PSCD3 and PSCD4.

It is found in the cytoplasm. It localises to the cell membrane. Functionally, enhances the promotion of guanine-nucleotide exchange by PSCD2 on ARF6 in a concentration-dependent manner. This Mus musculus (Mouse) protein is Interactor protein for cytohesin exchange factors 1 (Ipcef1).